The following is a 365-amino-acid chain: MKFFNREKEINEILLILEEEPNNIYFIYGPLNSGKSTLIREVITNRLDKSKYIPFFIDFRTRNILNVDNFIECLFEVDEKSKIDDFREYAKSLADLLVKGSEEISKYYLGMPIKVPKPFFDRIFSKRDKSADVYQYIEYLFAKLNEKGKKPILIFDELQMIREITLNGNRLLLWSLFQFLVALTKVQHLCHVFCLSSDSLFIEYIYGKAELKGGVDYILVDDFDKKTALKFMDFLAKQKNINLTNEDKELIYSYVGGKAKYIYDVIVKLKAVKDLKYILETKLEEERNHLEELLEKVEEDYEGINYDEVLEALKLFKDNYELPKSKIKRKIRIFLIKENILFLNPQKGTLKPQSYLVWNAIKRML.

29–36 (GPLNSGKS) is an ATP binding site.

The protein belongs to the archaeal ATPase family.

This is an uncharacterized protein from Methanocaldococcus jannaschii (strain ATCC 43067 / DSM 2661 / JAL-1 / JCM 10045 / NBRC 100440) (Methanococcus jannaschii).